A 305-amino-acid polypeptide reads, in one-letter code: Serine/threonine-protein phosphatase PP-X isozyme 1 (305 aa).

Mn(2+)-binding residues include aspartate 51, histidine 53, aspartate 79, and asparagine 111. Histidine 112 functions as the Proton donor in the catalytic mechanism. Mn(2+)-binding residues include histidine 161 and histidine 236.

This sequence belongs to the PPP phosphatase family. PP-4 (PP-X) subfamily. Interacts with TAP46. Requires Mn(2+) as cofactor. As to expression, ubiquitous, mostly expressed in root mersitems, flowers, and vascular tissues.

The protein resides in the plastid stroma. It carries out the reaction O-phospho-L-seryl-[protein] + H2O = L-seryl-[protein] + phosphate. The catalysed reaction is O-phospho-L-threonyl-[protein] + H2O = L-threonyl-[protein] + phosphate. The protein is Serine/threonine-protein phosphatase PP-X isozyme 1 (PPX1) of Arabidopsis thaliana (Mouse-ear cress).